The following is a 310-amino-acid chain: Methionyl-tRNA formyltransferase (310 aa).

Position 111–114 (111–114) interacts with (6S)-5,6,7,8-tetrahydrofolate; sequence SLLP.

Belongs to the Fmt family.

The catalysed reaction is L-methionyl-tRNA(fMet) + (6R)-10-formyltetrahydrofolate = N-formyl-L-methionyl-tRNA(fMet) + (6S)-5,6,7,8-tetrahydrofolate + H(+). Functionally, attaches a formyl group to the free amino group of methionyl-tRNA(fMet). The formyl group appears to play a dual role in the initiator identity of N-formylmethionyl-tRNA by promoting its recognition by IF2 and preventing the misappropriation of this tRNA by the elongation apparatus. The chain is Methionyl-tRNA formyltransferase from Rhodopseudomonas palustris (strain ATCC BAA-98 / CGA009).